The following is a 182-amino-acid chain: FMN reductase (NADH) RutF (182 aa).

This sequence belongs to the non-flavoprotein flavin reductase family. RutF subfamily.

It catalyses the reaction FMNH2 + NAD(+) = FMN + NADH + 2 H(+). In terms of biological role, catalyzes the reduction of FMN to FMNH2 which is used to reduce pyrimidine by RutA via the Rut pathway. This chain is FMN reductase (NADH) RutF, found in Yersinia enterocolitica serotype O:8 / biotype 1B (strain NCTC 13174 / 8081).